A 428-amino-acid chain; its full sequence is Putative G-protein coupled receptor F59B2.13 (428 aa).

Residues 1–30 (MSNNTTIPSKTATDICLTDRQMSLSVSSTE) are Extracellular-facing. Residues Asn-3 and Asn-4 are each glycosylated (N-linked (GlcNAc...) asparagine). The chain crosses the membrane as a helical span at residues 31 to 51 (GVLIGTIIPILVLFGISGNIL). The Cytoplasmic portion of the chain corresponds to 52 to 67 (NLTVLLAPNLRTRSNQ). A helical membrane pass occupies residues 68–88 (LLACLAVADIVSLVVILPHSM). Residues 89-110 (AHYETFETALWFRKFYGKYKFQ) are Extracellular-facing. A helical membrane pass occupies residues 111–131 (IIAMTNWSIATATWLVFVICL). The Cytoplasmic portion of the chain corresponds to 132–154 (ERLIIIKYPLSVRKQAKFFTPRN). Residues 155-175 (VVTIIVVTTFILTSYNHVSHA) form a helical membrane-spanning segment. The Extracellular segment spans residues 176-222 (CAEKLFCNGTQYHVACLGIDSERWFRNEPNPNSEFMKSVVRVAPQVN). N-linked (GlcNAc...) asparagine glycosylation occurs at Asn-183. A helical transmembrane segment spans residues 223–243 (AIFVVLIPVVLVIIFNVMLIL). At 244–278 (TLRQRTKLFEPSKTIRGDSQFTQLQSKTEHKVTIT) the chain is on the cytoplasmic side. Residues 279–299 (VTAIVTCFTITQSPSAFVTFL) form a helical membrane-spanning segment. At 300–309 (SSYVHRDWVT) the chain is on the extracellular side. The chain crosses the membrane as a helical span at residues 310–330 (LSAICTILVVLGKALNFVLFC). Over 331-428 (LSSASFRQRL…KEFRRGTSFV (98 aa)) the chain is Cytoplasmic.

The protein belongs to the G-protein coupled receptor 1 family.

The protein localises to the cell membrane. This is Putative G-protein coupled receptor F59B2.13 from Caenorhabditis elegans.